A 165-amino-acid polypeptide reads, in one-letter code: Growth arrest and DNA damage-inducible protein GADD45 alpha (165 aa).

The residue at position 2 (Thr2) is a Phosphothreonine.

This sequence belongs to the GADD45 family. In terms of assembly, interacts with AURKA, GADD45GIP1 and PCNA. Interacts with MAPK14.

The protein resides in the nucleus. In terms of biological role, might affect PCNA interaction with some CDK (cell division protein kinase) complexes; stimulates DNA excision repair in vitro and inhibits entry of cells into S phase. In T-cells, functions as a regulator of p38 MAPKs by inhibiting p88 phosphorylation and activity. The sequence is that of Growth arrest and DNA damage-inducible protein GADD45 alpha (Gadd45a) from Mus musculus (Mouse).